A 91-amino-acid chain; its full sequence is Small ribosomal subunit protein bS20 (91 aa).

The protein belongs to the bacterial ribosomal protein bS20 family.

Functionally, binds directly to 16S ribosomal RNA. In Wolinella succinogenes (strain ATCC 29543 / DSM 1740 / CCUG 13145 / JCM 31913 / LMG 7466 / NCTC 11488 / FDC 602W) (Vibrio succinogenes), this protein is Small ribosomal subunit protein bS20.